Here is an 88-residue protein sequence, read N- to C-terminus: Acyl-CoA-binding domain-containing protein 7 (88 aa).

Residues 3 to 88 (LQADFDKAAK…AKELIEKYGI (86 aa)) form the ACB domain. Residues Arg-15, 30-34 (YGLYK), Lys-56, and Tyr-75 contribute to the an acyl-CoA site.

The protein belongs to the ACBD7 family.

In terms of biological role, binds medium- and long-chain acyl-CoA esters. In Bos taurus (Bovine), this protein is Acyl-CoA-binding domain-containing protein 7 (ACBD7).